Reading from the N-terminus, the 835-residue chain is Transcription intermediary factor 1-beta (835 aa).

Positions 14 to 24 are enriched in low complexity; it reads AATAASAASGS. The segment at 14–57 is disordered; that stretch reads AATAASAASGSPGSGEGSAGGEKRPAASSAAAASASASSPAGGG. 3 positions are modified to phosphoserine: Ser-24, Ser-27, and Ser-31. Lys-36 participates in a covalent cross-link: Glycyl lysine isopeptide (Lys-Gly) (interchain with G-Cter in SUMO2). Residues 39 to 53 are compositionally biased toward low complexity; it reads AASSAAAASASASSP. Ser-52 carries the phosphoserine modification. The segment at 67–123 adopts an RING-type zinc-finger fold; sequence CGVCRERLRPERDPRLLPCLHSACSACLGPATPAAANNSGDGGSAGDGAMVDCPVCK. A Glycyl lysine isopeptide (Lys-Gly) (interchain with G-Cter in SUMO2) cross-link involves residue Lys-129. Ser-140 carries the phosphoserine modification. A B box-type 1; atypical zinc finger spans residues 150-197; it reads DANQCCTSCEDNAPATSYCVECSEPLCETCVEAHQRVKYTKDHTVRST. Zn(2+) contacts are provided by Cys-155, Cys-158, Cys-179, and His-183. A Glycyl lysine isopeptide (Lys-Gly) (interchain with G-Cter in SUMO2) cross-link involves residue Lys-201. The segment at 206-247 adopts a B box-type 2 zinc-finger fold; the sequence is ERTVYCNVHKHEPLVLFCESCDTLTCRDCQLNAHKDHQYQFL. Residues Cys-211, His-214, Cys-234, and His-239 each coordinate Zn(2+). A leucine zipper alpha helical coiled-coil region region spans residues 248–378; the sequence is EDAVRNQRKL…LIYFQLHRAL (131 aa). The tract at residues 249–378 is interaction with MAGEC2; the sequence is DAVRNQRKLL…LIYFQLHRAL (130 aa). Residues Lys-256 and Lys-263 each participate in a glycyl lysine isopeptide (Lys-Gly) (interchain with G-Cter in SUMO2) cross-link. An N6-acetyllysine modification is found at Lys-268. Lys-274 is covalently cross-linked (Glycyl lysine isopeptide (Lys-Gly) (interchain with G-Cter in SUMO2)). N6-acetyllysine; alternate is present on Lys-306. Lys-306 participates in a covalent cross-link: Glycyl lysine isopeptide (Lys-Gly) (interchain with G-Cter in SUMO2); alternate. Residue Lys-321 forms a Glycyl lysine isopeptide (Lys-Gly) (interchain with G-Cter in SUMO2) linkage. N6-acetyllysine is present on Lys-342. A Glycyl lysine isopeptide (Lys-Gly) (interchain with G-Cter in SUMO2) cross-link involves residue Lys-368. The interval 368 to 372 is involved in binding PPP1CA; the sequence is KLIYF. Lys-379 is modified (N6-acetyllysine; alternate). Lys-379 is covalently cross-linked (Glycyl lysine isopeptide (Lys-Gly) (interchain with G-Cter in SUMO2); alternate). Residue Lys-379 forms a Glycyl lysine isopeptide (Lys-Gly) (interchain with G-Cter in SUMO1); alternate linkage. Residue Lys-409 forms a Glycyl lysine isopeptide (Lys-Gly) (interchain with G-Cter in SUMO2) linkage. A disordered region spans residues 413-481; the sequence is ERPGTNSTGP…SRSGEGEVSG (69 aa). Position 419 is a phosphoserine (Ser-419). Lys-436 participates in a covalent cross-link: Glycyl lysine isopeptide (Lys-Gly) (interchain with G-Cter in SUMO2). The segment covering 436 to 445 has biased composition (polar residues); it reads KQGSGSSQPM. Phosphoserine occurs at positions 439 and 441. Lys-470 is covalently cross-linked (Glycyl lysine isopeptide (Lys-Gly) (interchain with G-Cter in SUMO2); alternate). Lys-470 participates in a covalent cross-link: Glycyl lysine isopeptide (Lys-Gly) (interchain with G-Cter in SUMO1); alternate. At Arg-471 the chain carries Citrulline. Ser-472 carries the post-translational modification Phosphoserine. Arg-473 bears the Citrulline mark. Residues Ser-474, Ser-480, and Ser-490 each carry the phosphoserine modification. An HP1 box region spans residues 477 to 514; it reads GEVSGLMRKVPRVSLERLDLDLTSDSQPPVFKVFPGST. The PxVxL motif signature appears at 482–495; that stretch reads LMRKVPRVSLERLD. At Thr-499 the chain carries Phosphothreonine. Ser-502 is subject to Phosphoserine. Lys-508 participates in a covalent cross-link: Glycyl lysine isopeptide (Lys-Gly) (interchain with G-Cter in SUMO2). A Glycyl lysine isopeptide (Lys-Gly) (interchain with G-Cter in SUMO2); alternate cross-link involves residue Lys-555. Lys-555 is covalently cross-linked (Glycyl lysine isopeptide (Lys-Gly) (interchain with G-Cter in SUMO); alternate). A Glycyl lysine isopeptide (Lys-Gly) (interchain with G-Cter in SUMO2) cross-link involves residue Lys-576. Phosphoserine is present on Ser-595. The PHD-type zinc-finger motif lies at 626–673; sequence ATICRVCQKPGDLVMCNQCEFCFHLDCHLPSLQDVPGEEWSCSLCHVL. Lys-677 is covalently cross-linked (Glycyl lysine isopeptide (Lys-Gly) (interchain with G-Cter in SUMO)). 3 positions are modified to phosphoserine: Ser-684, Ser-690, and Ser-698. The Bromo domain occupies 696-800; the sequence is KLSPANQRKC…RFFETRMNDA (105 aa). Lys-751 is covalently cross-linked (Glycyl lysine isopeptide (Lys-Gly) (interchain with G-Cter in SUMO2); alternate). Lys-751 participates in a covalent cross-link: Glycyl lysine isopeptide (Lys-Gly) (interchain with G-Cter in SUMO1); alternate. A Glycyl lysine isopeptide (Lys-Gly) (interchain with G-Cter in SUMO); alternate cross-link involves residue Lys-751. At Ser-753 the chain carries Phosphoserine. Tyr-756 is subject to Phosphotyrosine. Ser-758 bears the Phosphoserine mark. An N6-acetyllysine; alternate mark is found at Lys-771, Lys-775, and Lys-780. Glycyl lysine isopeptide (Lys-Gly) (interchain with G-Cter in SUMO2); alternate cross-links involve residues Lys-771, Lys-775, and Lys-780. A Glycyl lysine isopeptide (Lys-Gly) (interchain with G-Cter in SUMO1); alternate cross-link involves residue Lys-780. Ser-785 is modified (phosphoserine). Lys-805 participates in a covalent cross-link: Glycyl lysine isopeptide (Lys-Gly) (interchain with G-Cter in SUMO2). At Ser-825 the chain carries Phosphoserine; by ATM and ATR and dsDNA kinase.

This sequence belongs to the TRIM/RBCC family. In terms of assembly, interacts with ZNF382. Interacts with SETX. Oligomer; the RBCC domain homotrimerizes and interacts with one molecule of KRAB to form the KRAB-KAP1 corepressor complex. Binding to a KRAB domain is an absolute requirement for silencing gene expression. Interacts with CEBPB and NR3C1. Interacts with a number of KRAB-ZFP proteins including ZNF10, ZFP53, ZFP68 and ZNF256. Interacts with NCOR1, NR3C1 and CHD3. Interacts with CEBPB (via the RING-type and PHD-type zinc fingers). Component of a ternary complex that includes TRIM28, a HP1 protein (CBX1, CBX3 OR CBX5), a KRAB domain-containing protein, and DNA. Interacts with CBX5 (via the PxVxL motif); the interaction occurs in interphase nuclei and competes for binding POGZ. Interacts with POGZ; the interaction competes for interaction with CBX5. Interacts with SETDB1; the interaction is enhanced by KAP1 sumoylation, stimulates SETDB1 histone methyltransferase activity and gene silencing. Interacts (via the PHD-type zinc finger) with UBE2I; the interaction is required for sumoylation and repressor activity. Component of the TRIM28/KAP1-ERBB4-MDM2 complex involved in connecting growth factor and DNA damage responses. Interacts directly with ERBB4; the interaction represses ERBB4-mediated transcription activity. Interacts with MDM2; the interaction contributes to p53/TP53 inactivation. Component of the TRIM28/KAP1-MDM2-p53/TP53; involved in regulating p53/TP53 stabilization and activity. Interacts (via the leucine zipper alpha helical coiled-coil) with E2F1 (central region); the interaction inhibits E2F1 acetylation and transcriptional activity. Interacts with PPP1CA; the interaction dephosphorylates TRIM28 at Ser-824 and forms a complex at the p21 promoter site. Interacts with PPP1CB; the interaction is weak but is increased on dephosphorylation at Ser-824. Interacts with SMARCAD1. Interacts with, and sumoylates IRF7. Interacts with MAGEC2. Part of a complex composed of TRIM28, HDAC1, HDAC2 and EHMT2. Interacts with AICDA. The large PER complex involved in the histone methylation is composed of at least PER2, CBX3, TRIM28, SUV39H1 and/or SUV39H2; CBX3 mediates the formation of the complex. Interacts with NR4A3; the interactions potentiates NR4A3 activity on NurRE promoter. Interacts (unphosphorylated or phosphorylated form) with ZBTB1 (via BTB domain). Probably part of a corepressor complex containing ZNF304, TRIM28, SETDB1 and DNMT1. Interacts with ATRX. Forms a complex with ATRX, SETDB1 and ZNF274. Interacts with ZFP568; the interaction mediates ZFP568 transcriptional repression activity. Interacts with RRP1B. Interacts with CRY1. Interacts with ZNF263; recruited to the SIX3 promoter along with other proteins involved in chromatin modification and transcriptional corepression where it contributes to transcriptional repression. Interacts with CYREN (via XLF motif). Interacts with TRIM17; this interaction prevents TRIM28 activity. Interacts with ZNF746. Interacts with PHF13. Interacts with ZNF354C. Interacts with ZNF432; the interaction is independent of PARP1. In terms of processing, ATM-induced phosphorylation on Ser-825 represses sumoylation leading to the de-repression of expression of a subset of genes involved in cell cycle control and apoptosis in response to genotoxic stress. Dephosphorylation by the phosphatases, PPP1CA and PP1CB forms, allows sumoylation and expression of TRIM28 target genes. Sumoylation/desumoylation events regulate TRIM28-mediated transcriptional repression. Sumoylation is required for interaction with CHD3 and SETDB1 and the corepressor activity. Represses and is repressed by Ser-824 phosphorylation. Enhances the TRIM28 corepressor activity, inhibiting transcriptional activity of a number of genes including GADD45A and CDKN1A/p21. Lys-555, Lys-780 and Lys-805 are the major sites of sumoylation. In response to Dox-induced DNA damage, enhanced phosphorylation on Ser-825 prevents sumoylation and allows de-repression of CDKN1A/p21. Post-translationally, auto-ubiquitinated; enhanced by MAGEA2 and MAGEC2. In terms of processing, citrullinated by PADI4. ADP-ribosylated by SIRT6, promoting TRIM28/KAP1 interaction with CBX5, thereby contributing to the packaging of LINE-1 retrotransposon elements into transcriptionally repressive heterochromatin.

The protein resides in the nucleus. The catalysed reaction is S-ubiquitinyl-[E2 ubiquitin-conjugating enzyme]-L-cysteine + [acceptor protein]-L-lysine = [E2 ubiquitin-conjugating enzyme]-L-cysteine + N(6)-ubiquitinyl-[acceptor protein]-L-lysine.. Its pathway is protein modification; protein sumoylation. In terms of biological role, nuclear corepressor for KRAB domain-containing zinc finger proteins (KRAB-ZFPs). Mediates gene silencing by recruiting CHD3, a subunit of the nucleosome remodeling and deacetylation (NuRD) complex, and SETDB1 (which specifically methylates histone H3 at 'Lys-9' (H3K9me)) to the promoter regions of KRAB target genes. Enhances transcriptional repression by coordinating the increase in H3K9me, the decrease in histone H3 'Lys-9 and 'Lys-14' acetylation (H3K9ac and H3K14ac, respectively) and the disposition of HP1 proteins to silence gene expression. Recruitment of SETDB1 induces heterochromatinization. May play a role as a coactivator for CEBPB and NR3C1 in the transcriptional activation of ORM1. Also a corepressor for ERBB4. Inhibits E2F1 activity by stimulating E2F1-HDAC1 complex formation and inhibiting E2F1 acetylation. May serve as a partial backup to prevent E2F1-mediated apoptosis in the absence of RB1. Important regulator of CDKN1A/p21(CIP1). Has E3 SUMO-protein ligase activity toward itself via its PHD-type zinc finger. Also specifically sumoylates IRF7, thereby inhibiting its transactivation activity. Ubiquitinates p53/TP53 leading to its proteasomal degradation; the function is enhanced by MAGEC2 and MAGEA2, and possibly MAGEA3 and MAGEA6. Mediates the nuclear localization of KOX1, ZNF268 and ZNF300 transcription factors. In association with isoform 2 of ZFP90, is required for the transcriptional repressor activity of FOXP3 and the suppressive function of regulatory T-cells (Treg). Probably forms a corepressor complex required for activated KRAS-mediated promoter hypermethylation and transcriptional silencing of tumor suppressor genes (TSGs) or other tumor-related genes in colorectal cancer (CRC) cells. Required to maintain a transcriptionally repressive state of genes in undifferentiated embryonic stem cells (ESCs). In ESCs, in collaboration with SETDB1, is also required for H3K9me3 and silencing of endogenous and introduced retroviruses in a DNA-methylation independent-pathway. Associates at promoter regions of tumor suppressor genes (TSGs) leading to their gene silencing. The SETDB1-TRIM28-ZNF274 complex may play a role in recruiting ATRX to the 3'-exons of zinc finger genes with atypical chromatin signatures to establish or maintain/protect H3K9me3 at these transcriptionally active regions. The sequence is that of Transcription intermediary factor 1-beta from Rattus norvegicus (Rat).